The primary structure comprises 360 residues: Cyclin-D1-binding protein 1 (360 aa).

Ala-2 carries the post-translational modification N-acetylalanine. 2 interaction with TCF3 regions span residues 2-184 (ASAT…VDFV) and 150-360 (ISYN…ELEL). 2 interaction with RPLP0 regions span residues 2 to 190 (ASAT…AHEE) and 240 to 360 (LIIP…ELEL). Residues 2–208 (ASATAPAAAV…DPYSGLLNDT (207 aa)) are required for interaction with CCND1.

This sequence belongs to the CCNDBP1 family. Interacts with CCND1 and GRAP2. May also interact with COPS5, RPLP0, SIRT6, SYF2 and TCF3. In terms of processing, phosphorylated. Ubiquitously expressed. Expression is down-regulated in a variety of tumor types including breast, colon, prostate and rectal tumors, and is up-regulated in certain hepatic carcinomas.

The protein localises to the cytoplasm. Its subcellular location is the nucleus. In terms of biological role, may negatively regulate cell cycle progression. May act at least in part via inhibition of the cyclin-D1/CDK4 complex, thereby preventing phosphorylation of RB1 and blocking E2F-dependent transcription. The protein is Cyclin-D1-binding protein 1 (CCNDBP1) of Homo sapiens (Human).